Here is a 202-residue protein sequence, read N- to C-terminus: Probable GTP-binding protein EngB (202 aa).

Residues 26-200 (VSKEIAFTGS…KAQLDSWFSI (175 aa)) enclose the EngB-type G domain. GTP is bound by residues 34-41 (GSSNVGKS), 61-65 (GSTKT), 79-82 (DLPG), 146-149 (NKAD), and 179-181 (FSS). Ser-41 and Thr-63 together coordinate Mg(2+).

This sequence belongs to the TRAFAC class TrmE-Era-EngA-EngB-Septin-like GTPase superfamily. EngB GTPase family. Requires Mg(2+) as cofactor.

Its function is as follows. Necessary for normal cell division and for the maintenance of normal septation. The polypeptide is Probable GTP-binding protein EngB (Baumannia cicadellinicola subsp. Homalodisca coagulata).